A 625-amino-acid chain; its full sequence is Very-long-chain aldehyde decarbonylase CER1 (625 aa).

The next 5 helical transmembrane spans lie at 45-65 (LGYFLVFPFLLFRILHNQVWI), 126-146 (GVLMAALIHTGPVEFLYYWLH), 177-197 (PFAEHIAYFILFAIPLLTTLL), 200-220 (TASIISFAGYIIYIDFMNNMG), and 329-349 (LLWPFTSLSMIFTLFYARLFV). The 135-residue stretch at 138–272 (VEFLYYWLHK…MPLYDYIYGT (135 aa)) folds into the Fatty acid hydroxylase domain.

Belongs to the sterol desaturase family. In terms of assembly, homodimer. Interacts with CER3, CYTB5-B, CYTB5-C, CYTB5-D and CYTB5-E. In terms of tissue distribution, expressed in seedlings, stems, leaves, flowers, fruits and siliques. Not detected in roots, pollen and seeds. Expressed in trichomes, cotyledons, shoot apical meristem and leaf primordia. Preferentially associated with young leaves rather than mature leaves. Expressed in the epidermis of the stem and caulines leaves, in the carpels and the sepals.

It is found in the endoplasmic reticulum membrane. It carries out the reaction a long-chain fatty aldehyde + 2 NADPH + O2 + H(+) = a long-chain alkane + formate + 2 NADP(+) + H2O. Functionally, aldehyde decarbonylase involved in the conversion of aldehydes to alkanes. Core component of a very-long-chain alkane synthesis complex. Involved in epicuticular wax biosynthesis and pollen fertility. The chain is Very-long-chain aldehyde decarbonylase CER1 (CER1) from Arabidopsis thaliana (Mouse-ear cress).